The sequence spans 116 residues: Somatostatin (116 aa).

The signal sequence occupies residues 1–24; it reads MLSCRLQCALALLSIALAVGTVSA. The propeptide occupies 25-88; that stretch reads APSDPRLRQF…QDEVRLELER (64 aa). A disordered region spans residues 60–82; the sequence is PSQTENEALESEDLSRGAEQDEV. Basic and acidic residues predominate over residues 72–82; the sequence is DLSRGAEQDEV. A disulfide bridge connects residues Cys105 and Cys116.

Belongs to the somatostatin family.

It localises to the secreted. Its function is as follows. Somatostatin inhibits the release of somatotropin. The chain is Somatostatin (SST) from Gallus gallus (Chicken).